The primary structure comprises 1013 residues: MEEVQPPVTPPIEPNGKRSEASLLDICEKVLSLDGSTCDEALKLFTETKRILSASMSNIGSGTREEVERFWFAFILYSVKRLSVRKEADGLSVSGDNEFNLCQILRALKLNIVDFFKELPQFVVKAGSVLGELYGADWENRLQAKEVQANFVHLSLLSKYYKRGFREFFLTYDANAEKNSANSSTYLLDSYRFGWLLFLALRNHAFSRFKDLVTCSNGVVSILAILIIHVPCRFRNFSIQDSSRFVKKGDKGVDLVASLCKIYDASEDELRIVIDKANNLVETILKKKPSPASECQTDKLDNIDPDGLTYFEDLLEETSISTSLITLEKDYYDGKGELDERVFINEEDSLLGSGSLSAGAVNITGVKRKIDALSSPARTFISPLSPHKSPAAKTNGISGATKLAATPVSTAMTTAKWLRTVISPLLPKPSPGLEHFLKSCDRDITNDVTRRAHIILEAIFPNSSLGAQCGGGSLQAVDLMDDIWAEQRRLEACKLYYRVLEAMCKAEAQILHANNLNSLLTNERFHRCMLACSAELVLATHKTITMLFPAVLERTGITAFDLSKVIESFIRHEDSLPRELRRHLNSLEERLLESMVWEKGSSMYNSLIVARPSLALEINQLGLLAEPMPSLDAIAALINFSDGANHASSVQKHETCPGQNGGIRSPKRLCTDYRSILVERNSFTSPVKDRLLALGNVKSKMLPPPLQSAFASPTRPNPGGGGETCAETGINIFFTKINKLAAVRINGMVERLQLSQQIRESVYCFFQHVLAQRTSLLFSRHIDQIILCCFYGVAKISQMSLTFREIIYNYRKQPQCKPLVFRSVYVDALQCRRQGRIGPDHVDIITFYNEIFIPAVKPLLVELGPVRNDRAVEANNKPEGQCPGSPKVSVFPSVPDMSPKKVSAVHNVYVSPLRGSKMDALISHSTKSYYACVGESTHAYQSPSKDLSAINNRLNNSSSNRKRTLNFDAEAGMVSDSMVANSLNLQNQNQNQNGSDASSSGGAAPLKTEPTDS.

Residues 406–607 (TPVSTAMTTA…EKGSSMYNSL (202 aa)) form a domain A region. Positions 406–858 (TPVSTAMTTA…NEIFIPAVKP (453 aa)) are pocket. Positions 608 to 727 (IVARPSLALE…PGGGGETCAE (120 aa)) are spacer. The tract at residues 728–858 (TGINIFFTKI…NEIFIPAVKP (131 aa)) is domain B. S885 and S898 each carry phosphoserine. Residues 979 to 1013 (VANSLNLQNQNQNQNGSDASSSGGAAPLKTEPTDS) form a disordered region. Over residues 980–1004 (ANSLNLQNQNQNQNGSDASSSGGAA) the composition is skewed to low complexity.

Belongs to the retinoblastoma protein (RB) family. As to quaternary structure, interacts with the begomovirus replication-associated protein (Rep), the nanovirus Clink protein, the mastrevirus RepA protein, E2FA, E2FB and E2FC. Interacts with MSI1 through its Domain A. Interacts with ATPK1/S6K1. Interacts with SCR. Interacts with HAT2. Interacts with FAMA. Interacts with MYB124 and MYB88. Component of a DREAM-like complex which modulates a variety of developmentally regulated genes and of the mitotic genes in proliferating and differentiated cells. Associates with MYB3R3 in both earlier and later stages of leaves development. Interacts with MYB3R4 only at early stages of leaves development. Post-translationally, highly phosphorylated by CDKA-1 during G1 to S phase transition. Once hyper-phosphorylated, becomes inactive and unable to interact with E2F. Ubiquitinated. Subject to proteasome-dependent degradation during sucrose starvation. Expressed in actively dividing cells. Detected in the shoot apical meristem, in young leaf primordia and in both sporophytic tissue and the megagametophyte.

Its subcellular location is the nucleus. In terms of biological role, key regulator of entry into cell division. Acts as a transcription repressor of E2F target genes, whose activity is required for progress from the G1 to the S phase of the cell cycle. Hyperphosphorylation by CDKA-1 prevents the binding to E2F transcription factors, allowing G1 to S phase transition to operate. Forms a stable complex with E2FA that functions in maintaining cell proliferation through repression of cell differentiation. Plays a central role in the mechanism controlling meristem cell differentiation, cell fate establishment and cell fate maintenance during organogenesis and gametogenesis. Required during lateral organ production. Also involved in controlling asymmetric divisions of stem cells in different stem cell niches. Acts as a negative regulator of cell proliferation during leaf and gametophytes development. At later stages of development, restricts the progression through additional endocycles. In the leaf, plays a role in the control of the mesophyll differentiation. Another role is its implication in the regulation of imprinted genes. Acts together with MSI1 to repress the expression of MET1 during gametogenesis. This in turn activates expression of the imprinted genes FIS2 and FWA. Regulates many genes of the polycomb repressive complex 2 (PRC2). Plays an important role in meiosis affecting different aspects of this complex process. Functions as a positive regulator of the developmental switch from embryonic heterotrophic growth to autotrophic growth. Interaction with mastrevirus RepA or nanovirus Clink protein disrupts the RBR/E2F interaction and releases the transcription of replicative enzymes needed by the virus by increasing the E2F DNA-binding activity. This chain is Retinoblastoma-related protein 1 (RBR1), found in Arabidopsis thaliana (Mouse-ear cress).